The following is a 322-amino-acid chain: Adenine deaminase (322 aa).

Zn(2+) is bound by residues H11, H13, and H189. The active-site Proton donor is E192. Residue D270 coordinates Zn(2+). D271 serves as a coordination point for substrate.

Belongs to the metallo-dependent hydrolases superfamily. Adenosine and AMP deaminases family. Adenine deaminase type 2 subfamily. Requires Zn(2+) as cofactor.

It catalyses the reaction adenine + H2O + H(+) = hypoxanthine + NH4(+). In terms of biological role, catalyzes the hydrolytic deamination of adenine to hypoxanthine. Plays an important role in the purine salvage pathway and in nitrogen catabolism. This Rhizobium rhizogenes (strain K84 / ATCC BAA-868) (Agrobacterium radiobacter) protein is Adenine deaminase.